The primary structure comprises 795 residues: Protocadherin beta-12 (795 aa).

A signal peptide spans 1–26 (MENGGAGTLQIRQVLLFFVLLGMSQA). Over 27 to 690 (GSETGNFLVM…AQADSLTVYL (664 aa)) the chain is Extracellular. 5 consecutive Cadherin domains span residues 35–133 (VMEE…SPVF), 138–242 (MLLE…SPEF), 247–347 (YEVK…APEI), 352–451 (ITSP…APAF), and 456–561 (YALF…SPFV). N-linked (GlcNAc...) asparagine glycans are attached at residues asparagine 418, asparagine 436, asparagine 487, and asparagine 567. Positions 568–671 (GSAPCTELVP…LVDGFSQPYL (104 aa)) constitute a Cadherin 6 domain. A helical transmembrane segment spans residues 691–711 (VVALASVSSLFLFSVLLFVAV). Over 712-795 (RLCRRSRAAP…NPPFQNNLGF (84 aa)) the chain is Cytoplasmic.

The protein localises to the cell membrane. In terms of biological role, potential calcium-dependent cell-adhesion protein. May be involved in the establishment and maintenance of specific neuronal connections in the brain. The polypeptide is Protocadherin beta-12 (PCDHB12) (Homo sapiens (Human)).